A 276-amino-acid chain; its full sequence is Large ribosomal subunit protein uL2 (276 aa).

The tract at residues Arg-221–Lys-276 is disordered. The segment covering Lys-252–Lys-276 has biased composition (basic residues).

Belongs to the universal ribosomal protein uL2 family. Part of the 50S ribosomal subunit. Forms a bridge to the 30S subunit in the 70S ribosome.

Its function is as follows. One of the primary rRNA binding proteins. Required for association of the 30S and 50S subunits to form the 70S ribosome, for tRNA binding and peptide bond formation. It has been suggested to have peptidyltransferase activity; this is somewhat controversial. Makes several contacts with the 16S rRNA in the 70S ribosome. The polypeptide is Large ribosomal subunit protein uL2 (Aster yellows phytoplasma).